The following is a 165-amino-acid chain: CDP-archaeol synthase (165 aa).

Helical transmembrane passes span 4-24 (IVQL…AVLA), 78-98 (LLDA…GAFV), and 118-138 (FLLM…PLLL).

This sequence belongs to the CDP-archaeol synthase family. The cofactor is Mg(2+).

The protein resides in the cell membrane. It carries out the reaction 2,3-bis-O-(geranylgeranyl)-sn-glycerol 1-phosphate + CTP + H(+) = CDP-2,3-bis-O-(geranylgeranyl)-sn-glycerol + diphosphate. It participates in membrane lipid metabolism; glycerophospholipid metabolism. Catalyzes the formation of CDP-2,3-bis-(O-geranylgeranyl)-sn-glycerol (CDP-archaeol) from 2,3-bis-(O-geranylgeranyl)-sn-glycerol 1-phosphate (DGGGP) and CTP. This reaction is the third ether-bond-formation step in the biosynthesis of archaeal membrane lipids. This Pyrobaculum calidifontis (strain DSM 21063 / JCM 11548 / VA1) protein is CDP-archaeol synthase.